A 338-amino-acid polypeptide reads, in one-letter code: Ketol-acid reductoisomerase (NADP(+)) (338 aa).

The KARI N-terminal Rossmann domain occupies 1–181; that stretch reads MKVYYDKDAD…GGGRTGIIET (181 aa). NADP(+) contacts are provided by residues 24–27, R47, S50, S52, and 82–85; these read YGSQ and DEFQ. H107 is a catalytic residue. G133 is an NADP(+) binding site. Residues 182–327 form the KARI C-terminal knotted domain; that stretch reads TFKDETETDL…AKLRSMMPWI (146 aa). Mg(2+)-binding residues include D190, E194, E226, and E230. Residue S251 participates in substrate binding.

It belongs to the ketol-acid reductoisomerase family. The cofactor is Mg(2+).

It catalyses the reaction (2R)-2,3-dihydroxy-3-methylbutanoate + NADP(+) = (2S)-2-acetolactate + NADPH + H(+). It carries out the reaction (2R,3R)-2,3-dihydroxy-3-methylpentanoate + NADP(+) = (S)-2-ethyl-2-hydroxy-3-oxobutanoate + NADPH + H(+). The protein operates within amino-acid biosynthesis; L-isoleucine biosynthesis; L-isoleucine from 2-oxobutanoate: step 2/4. Its pathway is amino-acid biosynthesis; L-valine biosynthesis; L-valine from pyruvate: step 2/4. Functionally, involved in the biosynthesis of branched-chain amino acids (BCAA). Catalyzes an alkyl-migration followed by a ketol-acid reduction of (S)-2-acetolactate (S2AL) to yield (R)-2,3-dihydroxy-isovalerate. In the isomerase reaction, S2AL is rearranged via a Mg-dependent methyl migration to produce 3-hydroxy-3-methyl-2-ketobutyrate (HMKB). In the reductase reaction, this 2-ketoacid undergoes a metal-dependent reduction by NADPH to yield (R)-2,3-dihydroxy-isovalerate. In Thiobacillus denitrificans (strain ATCC 25259 / T1), this protein is Ketol-acid reductoisomerase (NADP(+)).